Here is a 339-residue protein sequence, read N- to C-terminus: Heat-inducible transcription repressor HrcA (339 aa).

The protein belongs to the HrcA family.

Its function is as follows. Negative regulator of class I heat shock genes (grpE-dnaK-dnaJ and groELS operons). Prevents heat-shock induction of these operons. The protein is Heat-inducible transcription repressor HrcA of Parafrankia sp. (strain EAN1pec).